Reading from the N-terminus, the 239-residue chain is MKLNISYPANGTQKLIEIDDDRRLRVFMEKRMGQEVPGDSVGPEFAGYVFKITGGNDKQGFPMFQGVLLPHRVRLLLRAGHPCYRPRRDGERKRKSVRGCIVGQDLAVLALAIIKQGEQDIPGLTDVTVPKRLGPKRASKIRRFFNLSKEDDVRQFVIRREVVPKKEGKKPYTKAPKIQRLVTPRTLQHKRHRFALKRRQAEKNREEAAEFAQLMAKRVAEAKQKREVVKARRASSLKK.

Ser-235 and Ser-236 each carry phosphoserine.

This sequence belongs to the eukaryotic ribosomal protein eS6 family. Component of the small ribosomal subunit (SSU). Mature yeast ribosomes consist of a small (40S) and a large (60S) subunit. The 40S small subunit contains 1 molecule of ribosomal RNA (18S rRNA) and at least 33 different proteins. The large 60S subunit contains 3 rRNA molecules (25S, 5.8S and 5S rRNA) and at least 46 different proteins. Interacts with snoRNA U3. uS11 interacts with MPP10. Component of the ribosomal small subunit (SSU) processome composed of at least 40 protein subunits and snoRNA U3. In terms of processing, phosphorylated.

The protein localises to the cytoplasm. Functionally, component of the ribosome, a large ribonucleoprotein complex responsible for the synthesis of proteins in the cell. The small ribosomal subunit (SSU) binds messenger RNAs (mRNAs) and translates the encoded message by selecting cognate aminoacyl-transfer RNA (tRNA) molecules. The large subunit (LSU) contains the ribosomal catalytic site termed the peptidyl transferase center (PTC), which catalyzes the formation of peptide bonds, thereby polymerizing the amino acids delivered by tRNAs into a polypeptide chain. The nascent polypeptides leave the ribosome through a tunnel in the LSU and interact with protein factors that function in enzymatic processing, targeting, and the membrane insertion of nascent chains at the exit of the ribosomal tunnel. eS6 is involved in nucleolar processing of pre-18S ribosomal RNA and ribosome assembly. The sequence is that of Small ribosomal subunit protein eS6A (rps601) from Schizosaccharomyces pombe (strain 972 / ATCC 24843) (Fission yeast).